A 174-amino-acid chain; its full sequence is Transcription antitermination protein NusB (174 aa).

A compositionally biased stretch (polar residues) spans methionine 1–threonine 11. The tract at residues methionine 1–alanine 29 is disordered.

This sequence belongs to the NusB family.

Involved in transcription antitermination. Required for transcription of ribosomal RNA (rRNA) genes. Binds specifically to the boxA antiterminator sequence of the ribosomal RNA (rrn) operons. The polypeptide is Transcription antitermination protein NusB (Marinomonas sp. (strain MWYL1)).